A 309-amino-acid polypeptide reads, in one-letter code: Probable RuBisCO transcriptional regulator (309 aa).

One can recognise an HTH lysR-type domain in the interval 5 to 62; it reads FTLQQLRILKAIATEKSFTRAAEVLFVSQPSLSKQIKTLESRLNISLLNRENNIVSLT. Positions 22–41 form a DNA-binding region, H-T-H motif; it reads FTRAAEVLFVSQPSLSKQIK.

Belongs to the LysR transcriptional regulatory family.

It is found in the plastid. The protein resides in the chloroplast. In terms of biological role, trans-acting transcriptional regulator of RuBisCO genes (rbcL and rbcS) expression. This Trieres chinensis (Marine centric diatom) protein is Probable RuBisCO transcriptional regulator (rbcR).